The chain runs to 482 residues: ATP-dependent rRNA helicase rrp3 (482 aa).

Positions 1-55 (MSSVKRRKTEKNTSSGLKSKQAKEPKEASPLSSPEPTEENQNNEIEEGTEEEEVT) are disordered. Acidic residues predominate over residues 44-53 (EIEEGTEEEE). The short motif at 56–84 (KSFKDLGIVDSLCEACDTLGYKAPTPIQR) is the Q motif element. Positions 87 to 258 (IPLALQGRDL…RASLKDPLRV (172 aa)) constitute a Helicase ATP-binding domain. ATP is bound at residue 100–107 (AETGSGKT). Residues 206–209 (DEAD) carry the DEAD box motif. The 149-residue stretch at 282–430 (HKDTYLIYLL…EYQTVKDEVM (149 aa)) folds into the Helicase C-terminal domain. Composition is skewed to basic and acidic residues over residues 444 to 456 (RNEM…DRGK) and 472 to 482 (RGRDEMDREEG). The interval 444-482 (RNEMKNLHEDRGKKGAVLKGRRPANGAKRGRDEMDREEG) is disordered.

It belongs to the DEAD box helicase family. DDX47/RRP3 subfamily. In terms of assembly, interacts with the SSU processome.

It is found in the nucleus. The catalysed reaction is ATP + H2O = ADP + phosphate + H(+). Its function is as follows. ATP-dependent rRNA helicase required for pre-ribosomal RNA processing. Involved in the maturation of the 35S-pre-rRNA and to its cleavage to mature 18S rRNA. In Sclerotinia sclerotiorum (strain ATCC 18683 / 1980 / Ss-1) (White mold), this protein is ATP-dependent rRNA helicase rrp3.